We begin with the raw amino-acid sequence, 33 residues long: Mu-theraphotoxin-Os1a (33 aa).

Disulfide bonds link C2–C17, C9–C22, and C16–C29. Position 33 is a leucine amide (L33).

It belongs to the neurotoxin 10 (Hwtx-1) family. 14 (Hntx-1) subfamily. As to quaternary structure, monomer. In terms of tissue distribution, expressed by the venom gland.

The protein resides in the secreted. Potently and reversibly inhibits some human voltage-gated sodium channels (Nav1.1/SCN1A (IC(50)=72.0 nM), Nav1.2/SCN2A (IC(50)=75.5 nM), Nav1.6/SCN8A (IC(50)=115.0 nM), Nav1.7/SCN9A (IC(50)=52.7-129.5 nM), Nav1.3/SCN3A (IC(50)=306.6 nM)). The hNav1.7/SCN9A channel inhibition occurs without any change in steady-state inactivation- and conductance-voltage relationships. On adult mouse DRG neurons, this toxin is approximately 1000-fold more efficient to inhibit tetrodotoxin (TTX)-sensitive than TTX-resistant sodium currents. In vivo, this toxin exhibits analgesic effects in mice pain models. The polypeptide is Mu-theraphotoxin-Os1a (Omothymus schioedtei (Malaysian earth tiger tarantula)).